We begin with the raw amino-acid sequence, 299 residues long: Tyrosine recombinase XerC (299 aa).

In terms of domain architecture, Core-binding (CB) spans 1–85 (MQNELDAYFE…SVRGLYRYLN (85 aa)). One can recognise a Tyr recombinase domain in the interval 106–285 (RLPRLLDTDR…DFQHLAKVYD (180 aa)). Residues Arg146, Lys170, His237, Arg240, and His263 contribute to the active site. Tyr272 acts as the O-(3'-phospho-DNA)-tyrosine intermediate in catalysis.

This sequence belongs to the 'phage' integrase family. XerC subfamily. As to quaternary structure, forms a cyclic heterotetrameric complex composed of two molecules of XerC and two molecules of XerD.

The protein resides in the cytoplasm. Site-specific tyrosine recombinase, which acts by catalyzing the cutting and rejoining of the recombining DNA molecules. The XerC-XerD complex is essential to convert dimers of the bacterial chromosome into monomers to permit their segregation at cell division. It also contributes to the segregational stability of plasmids. This is Tyrosine recombinase XerC from Stutzerimonas stutzeri (strain A1501) (Pseudomonas stutzeri).